A 313-amino-acid chain; its full sequence is NADH-ubiquinone oxidoreductase chain 1 (313 aa).

8 helical membrane-spanning segments follow: residues 7–27, 73–93, 104–124, 150–170, 175–195, 226–246, 250–270, and 293–313; these read LIGS…LTLL, IFYY…WMSM, LGVL…MVAG, LALI…LNFF, YMWF…SCLA, LIFL…SVIF, DIYS…FIWV, and MSLN…SMLF.

Belongs to the complex I subunit 1 family.

The protein resides in the mitochondrion inner membrane. It carries out the reaction a ubiquinone + NADH + 5 H(+)(in) = a ubiquinol + NAD(+) + 4 H(+)(out). Its function is as follows. Core subunit of the mitochondrial membrane respiratory chain NADH dehydrogenase (Complex I) that is believed to belong to the minimal assembly required for catalysis. Complex I functions in the transfer of electrons from NADH to the respiratory chain. The immediate electron acceptor for the enzyme is believed to be ubiquinone. This is NADH-ubiquinone oxidoreductase chain 1 from Aedes aegypti (Yellowfever mosquito).